The primary structure comprises 600 residues: DNA mismatch repair protein MutL (600 aa).

The protein belongs to the DNA mismatch repair MutL/HexB family.

Functionally, this protein is involved in the repair of mismatches in DNA. It is required for dam-dependent methyl-directed DNA mismatch repair. May act as a 'molecular matchmaker', a protein that promotes the formation of a stable complex between two or more DNA-binding proteins in an ATP-dependent manner without itself being part of a final effector complex. The protein is DNA mismatch repair protein MutL of Sinorhizobium fredii (strain NBRC 101917 / NGR234).